The following is a 333-amino-acid chain: Ribonucleoside-diphosphate reductase small chain B (333 aa).

D76, E107, and H110 together coordinate Fe cation. Y114 is a catalytic residue. Residues E169, E203, and H206 each coordinate Fe cation.

Belongs to the ribonucleoside diphosphate reductase small chain family. As to quaternary structure, heterodimer of a large and a small chain. It depends on Fe cation as a cofactor. Expressed in roots, rosette leaves, stems and flowers.

Its subcellular location is the cytoplasm. It carries out the reaction a 2'-deoxyribonucleoside 5'-diphosphate + [thioredoxin]-disulfide + H2O = a ribonucleoside 5'-diphosphate + [thioredoxin]-dithiol. Provides the precursors necessary for DNA synthesis. Catalyzes the biosynthesis of deoxyribonucleotides from the corresponding ribonucleotides. The sequence is that of Ribonucleoside-diphosphate reductase small chain B (RNR2B) from Arabidopsis thaliana (Mouse-ear cress).